A 933-amino-acid chain; its full sequence is uncharacterized protein (933 aa).

Residues 244–255 (KKDIGAKPKPVD) are compositionally biased toward basic and acidic residues. Disordered stretches follow at residues 244-277 (KKDIGAKPKPVDDVSPQPVRARTPPENTVVELPD) and 343-364 (SAPHQPSSQHAQMGRHSQEWKG). Residues 343 to 353 (SAPHQPSSQHA) are compositionally biased toward polar residues. Residues 771-791 (VIHGMVLMFAGGKLLFGGCVL) traverse the membrane as a helical segment. Residues 890-907 (DKIEKEPPPSPEKVKPPE) show a composition bias toward basic and acidic residues. The disordered stretch occupies residues 890 to 933 (DKIEKEPPPSPEKVKPPEIELQPFTKMRRSSKKTAGFKKLNSKK). The span at 915 to 933 (KMRRSSKKTAGFKKLNSKK) shows a compositional bias: basic residues.

It localises to the membrane. This is an uncharacterized protein from Mus musculus (Mouse).